The following is a 511-amino-acid chain: Histidine ammonia-lyase (511 aa).

A cross-link (5-imidazolinone (Ala-Gly)) is located at residues 143–145; it reads ASG. Ser-144 bears the 2,3-didehydroalanine (Ser) mark.

Belongs to the PAL/histidase family. Post-translationally, contains an active site 4-methylidene-imidazol-5-one (MIO), which is formed autocatalytically by cyclization and dehydration of residues Ala-Ser-Gly.

It is found in the cytoplasm. The catalysed reaction is L-histidine = trans-urocanate + NH4(+). Its pathway is amino-acid degradation; L-histidine degradation into L-glutamate; N-formimidoyl-L-glutamate from L-histidine: step 1/3. The protein is Histidine ammonia-lyase of Idiomarina loihiensis (strain ATCC BAA-735 / DSM 15497 / L2-TR).